Reading from the N-terminus, the 259-residue chain is Phosphate import ATP-binding protein PstB (259 aa).

One can recognise an ABC transporter domain in the interval 13–254 (IQVRDLNFYY…PAQRQTEDYI (242 aa)). 45 to 52 (GPSGCGKS) lines the ATP pocket.

Belongs to the ABC transporter superfamily. Phosphate importer (TC 3.A.1.7) family. In terms of assembly, the complex is composed of two ATP-binding proteins (PstB), two transmembrane proteins (PstC and PstA) and a solute-binding protein (PstS).

Its subcellular location is the cell inner membrane. The enzyme catalyses phosphate(out) + ATP + H2O = ADP + 2 phosphate(in) + H(+). Functionally, part of the ABC transporter complex PstSACB involved in phosphate import. Responsible for energy coupling to the transport system. The chain is Phosphate import ATP-binding protein PstB from Edwardsiella tarda.